Reading from the N-terminus, the 238-residue chain is Purine nucleoside phosphorylase DeoD-type (238 aa).

Residue H4 participates in a purine D-ribonucleoside binding. Phosphate-binding positions include G20, R24, R43, and 87–90 (RVGT). Residues 179–181 (EME) and 203–204 (SN) each bind a purine D-ribonucleoside.

This sequence belongs to the PNP/UDP phosphorylase family. Homohexamer; trimer of homodimers.

The catalysed reaction is a purine D-ribonucleoside + phosphate = a purine nucleobase + alpha-D-ribose 1-phosphate. The enzyme catalyses a purine 2'-deoxy-D-ribonucleoside + phosphate = a purine nucleobase + 2-deoxy-alpha-D-ribose 1-phosphate. Catalyzes the reversible phosphorolytic breakdown of the N-glycosidic bond in the beta-(deoxy)ribonucleoside molecules, with the formation of the corresponding free purine bases and pentose-1-phosphate. The chain is Purine nucleoside phosphorylase DeoD-type from Lacticaseibacillus casei (strain BL23) (Lactobacillus casei).